The sequence spans 404 residues: MCSIGEDDFGDEGAAHAMVVEALPLGIVLSPGNCSKCDVNSGELYKLNFRAAECRECFLTYARHKFRAALGAAKILPRNAEVLLVLDGSAKSLVLLDMLHFAQTQNQFKRLHCNARVVYVEEQQVQDRDPVDLEALLSLSVQYAPFDFYVIELGQGCSLQRIKDYSPSLKANNELIHKLQKLQSLTARQDYLQQQRKNLICSVAQSLQCTHVFEPNISVDLATQLLTAIALGRGASAALDVALLDDRLSGDVKLLRPLKDLSEQEIQFYIHAQRLKPLFQSGSHYGMERGPTASLQNLTSAFVANLQHNYASTVSTVFRTGDKIAVNSDPEQATCVHCQSALDSELSDTLLAIEYSRSVSEAGVSLYKNGQDLESLAKKRLEMQDGLCHACRAIQAELESGNLL.

It belongs to the CTU2/NCS2 family.

The protein localises to the cytoplasm. The protein operates within tRNA modification; 5-methoxycarbonylmethyl-2-thiouridine-tRNA biosynthesis. Its function is as follows. Plays a central role in 2-thiolation of mcm(5)S(2)U at tRNA wobble positions of tRNA(Lys), tRNA(Glu) and tRNA(Gln). May act by forming a heterodimer with NCS6/CTU1 that ligates sulfur from thiocarboxylated URM1 onto the uridine of tRNAs at wobble position. In Drosophila erecta (Fruit fly), this protein is Cytoplasmic tRNA 2-thiolation protein 2.